The following is a 545-amino-acid chain: Oligopeptide-binding protein OppA (545 aa).

The signal sequence occupies residues 1–20; the sequence is MKKRWSIVTLMLIFTLVLSA. Residue Cys21 is the site of N-palmitoyl cysteine attachment. The S-diacylglycerol cysteine moiety is linked to residue Cys21. Thr470 bears the Phosphothreonine mark.

The protein belongs to the bacterial solute-binding protein 5 family. The complex is composed of two ATP-binding proteins (OppD and OppF), two transmembrane proteins (OppB and OppC) and a solute-binding protein (OppA). OppA interacts with FloT in detergent-resistant membranes (DRM). Colocalizes rarely with FloT membrane assemblies.

The protein localises to the cell membrane. Its subcellular location is the membrane raft. Functionally, part of the ABC transporter complex OppABCDF involved in the uptake of oligopeptides. Plays an important nutritional role. Binds peptides containing up to five amino acids residues regardless of their sequence, with highest affinity for tetra- and pentapeptides. Binds to the sporulation-promoting peptide PhrE (Ser-Arg-Asn-Val-Thr). Required for sporulation and genetic competence. This Bacillus subtilis (strain 168) protein is Oligopeptide-binding protein OppA.